The sequence spans 175 residues: NADH-ubiquinone oxidoreductase chain 6 (175 aa).

The next 6 membrane-spanning stretches (helical) occupy residues 1 to 21 (MMYI…GFSS), 24 to 44 (SPVY…GIIM), 51 to 71 (LGLV…GYTI), 87 to 107 (VVLS…VWLF), 113 to 133 (LVGF…GSFG), and 148 to 168 (YGFW…FIAI).

Belongs to the complex I subunit 6 family. In terms of assembly, core subunit of respiratory chain NADH dehydrogenase (Complex I) which is composed of 45 different subunits.

It is found in the mitochondrion inner membrane. The enzyme catalyses a ubiquinone + NADH + 5 H(+)(in) = a ubiquinol + NAD(+) + 4 H(+)(out). In terms of biological role, core subunit of the mitochondrial membrane respiratory chain NADH dehydrogenase (Complex I) which catalyzes electron transfer from NADH through the respiratory chain, using ubiquinone as an electron acceptor. Essential for the catalytic activity and assembly of complex I. The protein is NADH-ubiquinone oxidoreductase chain 6 (MT-ND6) of Mammuthus primigenius (Siberian woolly mammoth).